A 100-amino-acid chain; its full sequence is NADH-quinone oxidoreductase subunit K 1 (100 aa).

3 helical membrane-spanning segments follow: residues 4–24 (LHSYLIVSAILFSIGTIGVLV), 29–49 (IVIFMCVEMMLNAVNLTFIAL), and 60–80 (IFVFFVMTVAAAEAAVGLALM).

This sequence belongs to the complex I subunit 4L family. In terms of assembly, NDH-1 is composed of 14 different subunits. Subunits NuoA, H, J, K, L, M, N constitute the membrane sector of the complex.

It localises to the cell inner membrane. It catalyses the reaction a quinone + NADH + 5 H(+)(in) = a quinol + NAD(+) + 4 H(+)(out). Functionally, NDH-1 shuttles electrons from NADH, via FMN and iron-sulfur (Fe-S) centers, to quinones in the respiratory chain. The immediate electron acceptor for the enzyme in this species is believed to be ubiquinone. Couples the redox reaction to proton translocation (for every two electrons transferred, four hydrogen ions are translocated across the cytoplasmic membrane), and thus conserves the redox energy in a proton gradient. This chain is NADH-quinone oxidoreductase subunit K 1, found in Geobacter sulfurreducens (strain ATCC 51573 / DSM 12127 / PCA).